The chain runs to 160 residues: Dihydrofolate reductase (160 aa).

The DHFR domain occupies 2-159; that stretch reads TFSLIVATTL…YDCRFLILTR (158 aa). Ile6 provides a ligand contact to substrate. NADP(+) is bound by residues Ala8 and 14–20; that span reads VIGKDNQ. Asp28 is a binding site for substrate. 46–47 lines the NADP(+) pocket; the sequence is KT. Substrate contacts are provided by Arg53 and Arg58. NADP(+)-binding positions include 64–65 and 96–103; these read SR and GGGELFKQ. Thr114 serves as a coordination point for substrate.

This sequence belongs to the dihydrofolate reductase family.

The enzyme catalyses (6S)-5,6,7,8-tetrahydrofolate + NADP(+) = 7,8-dihydrofolate + NADPH + H(+). Its pathway is cofactor biosynthesis; tetrahydrofolate biosynthesis; 5,6,7,8-tetrahydrofolate from 7,8-dihydrofolate: step 1/1. Key enzyme in folate metabolism. Catalyzes an essential reaction for de novo glycine and purine synthesis, and for DNA precursor synthesis. This Haemophilus influenzae (strain ATCC 51907 / DSM 11121 / KW20 / Rd) protein is Dihydrofolate reductase (folA).